Here is a 248-residue protein sequence, read N- to C-terminus: tRNA pseudouridine synthase A (248 aa).

Asp-53 functions as the Nucleophile in the catalytic mechanism. Tyr-111 lines the substrate pocket.

Belongs to the tRNA pseudouridine synthase TruA family. As to quaternary structure, homodimer.

It catalyses the reaction uridine(38/39/40) in tRNA = pseudouridine(38/39/40) in tRNA. Formation of pseudouridine at positions 38, 39 and 40 in the anticodon stem and loop of transfer RNAs. This Listeria welshimeri serovar 6b (strain ATCC 35897 / DSM 20650 / CCUG 15529 / CIP 8149 / NCTC 11857 / SLCC 5334 / V8) protein is tRNA pseudouridine synthase A.